A 399-amino-acid chain; its full sequence is uncharacterized protein (399 aa).

This sequence belongs to the AdoMet synthetase 2 family.

This is an uncharacterized protein from Streptococcus pyogenes serotype M1.